Reading from the N-terminus, the 255-residue chain is Flap endonuclease Xni (255 aa).

D105 serves as a coordination point for Mg(2+). Residues 162 to 253 (EHSQFIDYLA…NLSQFRLPNP (92 aa)) form the 5'-3' exonuclease domain. K(+) contacts are provided by L172, A173, P181, V183, and I186. Residues 185 to 190 (GIGPKS) form an interaction with DNA region.

The protein belongs to the Xni family. Mg(2+) is required as a cofactor. K(+) serves as cofactor.

In terms of biological role, has flap endonuclease activity. During DNA replication, flap endonucleases cleave the 5'-overhanging flap structure that is generated by displacement synthesis when DNA polymerase encounters the 5'-end of a downstream Okazaki fragment. This chain is Flap endonuclease Xni, found in Shewanella sediminis (strain HAW-EB3).